Reading from the N-terminus, the 618-residue chain is Structural protein ORF618 (618 aa).

The stretch at 570 to 598 (ILEAKRQIEDRAKGLSKNLDNTVTEIMNA) forms a coiled coil.

Its subcellular location is the virion. This chain is Structural protein ORF618, found in Acidianus two-tailed virus (ATV).